The sequence spans 3083 residues: Laminin subunit alpha-1 (3083 aa).

An N-terminal signal peptide occupies residues 1–24 (MRGSGTGAALLVLLASVLWVTVRS). Pyrrolidone carboxylic acid is present on Gln-25. In terms of domain architecture, Laminin N-terminal spans 25–276 (QQRGLFPAIL…SIKDISVGGM (252 aa)). Disulfide bonds link Cys-277–Cys-286, Cys-279–Cys-297, Cys-299–Cys-308, Cys-311–Cys-331, Cys-334–Cys-343, and Cys-336–Cys-368. 4 Laminin EGF-like domains span residues 277 to 333 (CICY…ECEE), 334 to 403 (CNCH…PCRP), 404 to 460 (CNCD…NCIP), and 461 to 509 (CDCR…GCSE). Residue Asn-370 is glycosylated (N-linked (GlcNAc...) asparagine). 10 disulfide bridges follow: Cys-371–Cys-380, Cys-383–Cys-401, Cys-404–Cys-416, Cys-406–Cys-434, Cys-436–Cys-445, Cys-448–Cys-458, Cys-461–Cys-474, Cys-463–Cys-478, Cys-480–Cys-489, and Cys-492–Cys-507. The Laminin EGF-like 5; first part domain maps to 510 to 519 (CFCFGVSGVC). Residues 523–715 (TWSISQVTNM…DLAVAADVEH (193 aa)) enclose the Laminin IV type A 1 domain. An N-linked (GlcNAc...) asparagine glycan is attached at Asn-672. Positions 716–748 (CECPQGYTGTSCEACLPGYYRVDGILFGGICQP) constitute a Laminin EGF-like 5; second part domain. 32 disulfide bridges follow: Cys-749–Cys-758, Cys-751–Cys-764, Cys-767–Cys-776, Cys-779–Cys-795, Cys-798–Cys-813, Cys-800–Cys-823, Cys-826–Cys-835, Cys-838–Cys-853, Cys-856–Cys-870, Cys-858–Cys-877, Cys-880–Cys-889, Cys-892–Cys-906, Cys-909–Cys-921, Cys-911–Cys-928, Cys-930–Cys-939, Cys-942–Cys-955, Cys-958–Cys-970, Cys-960–Cys-976, Cys-978–Cys-987, Cys-990–Cys-1002, Cys-1005–Cys-1014, Cys-1007–Cys-1021, Cys-1023–Cys-1032, Cys-1035–Cys-1048, Cys-1051–Cys-1063, Cys-1053–Cys-1070, Cys-1072–Cys-1081, Cys-1084–Cys-1094, Cys-1097–Cys-1109, Cys-1099–Cys-1125, Cys-1127–Cys-1136, and Cys-1139–Cys-1154. 8 Laminin EGF-like domains span residues 749-797 (CECH…DCQP), 798-855 (CACP…TCVP), 856-908 (CNCS…NCRA), 909-957 (CDCH…GCVP), 958-1004 (CNCS…GCTP), 1005-1050 (CDCA…GCQA), 1051-1096 (CNCS…DCVP), and 1097-1156 (CGCD…GCSP). Residues 1147–1149 (RGD) carry the Cell attachment site motif. The region spanning 1157-1166 (CFCFGLSQLC) is the Laminin EGF-like 14; first part domain. A Laminin IV type A 2 domain is found at 1177–1368 (ITLASDQPLL…EGEAALLLEL (192 aa)). Residue Asn-1344 is glycosylated (N-linked (GlcNAc...) asparagine). One can recognise a Laminin EGF-like 14; second part domain in the interval 1369–1409 (CVCPPGTAGHSCQDCAPGYYREKLPESGGRGPRPLLAPCVP). Disulfide bonds link Cys-1410–Cys-1419, Cys-1412–Cys-1426, Cys-1429–Cys-1438, Cys-1441–Cys-1456, Cys-1459–Cys-1473, Cys-1461–Cys-1483, Cys-1486–Cys-1495, Cys-1498–Cys-1513, Cys-1516–Cys-1528, Cys-1518–Cys-1535, Cys-1537–Cys-1546, and Cys-1549–Cys-1560. 3 Laminin EGF-like domains span residues 1410–1458 (CNCN…DCTP), 1459–1515 (CTCP…SCQT), and 1516–1562 (CDCN…DCVS). The domain II and I stretch occupies residues 1564-2123 (DDDCVGPLLN…SRARKQVASI (560 aa)). A coiled-coil region spans residues 1617–1691 (AKKIRAEIQL…VATLNQTARK (75 aa)). Residues Asn-1659, Asn-1686, Asn-1718, Asn-1725, Asn-1763, and Asn-1811 are each glycosylated (N-linked (GlcNAc...) asparagine). Residues 1723-1809 (QQNATLELKA…QEKKLRVQEE (87 aa)) adopt a coiled-coil conformation. A coiled-coil region spans residues 1868–1901 (KRRARDLVHRAEQHASELQSRAGALDRDLENVRN). N-linked (GlcNAc...) asparagine glycosylation is found at Asn-1935, Asn-2026, Asn-2045, and Asn-2066. 5 Laminin G-like domains span residues 2124–2304 (KVAV…CNGC), 2312–2488 (DSSF…RKGC), 2493–2679 (IQSV…LDTC), 2721–2893 (AHQF…VDRC), and 2898–3078 (QEGT…PHSC). Cys-2278 and Cys-2304 form a disulfide bridge. Asn-2355 carries an N-linked (GlcNAc...) asparagine glycan. Cystine bridges form between Cys-2464–Cys-2488 and Cys-2652–Cys-2679. An N-linked (GlcNAc...) asparagine glycan is attached at Asn-2834. Cys-2868 and Cys-2893 are disulfide-bonded. A glycan (N-linked (GlcNAc...) asparagine) is linked at Asn-2923. The cysteines at positions 3047 and 3078 are disulfide-linked.

In terms of assembly, laminin is a complex glycoprotein, consisting of three different polypeptide chains (alpha, beta, gamma), which are bound to each other by disulfide bonds into a cross-shaped molecule comprising one long and three short arms with globules at each end. Alpha-1 is a subunit of laminin-1 (laminin-111 or EHS laminin) and laminin-3 (laminin-121 or S-laminin). Post-translationally, tyrosine phosphorylated by PKDCC/VLK.

The protein localises to the secreted. The protein resides in the extracellular space. Its subcellular location is the extracellular matrix. It is found in the basement membrane. Binding to cells via a high affinity receptor, laminin is thought to mediate the attachment, migration and organization of cells into tissues during embryonic development by interacting with other extracellular matrix components. The chain is Laminin subunit alpha-1 (Lama1) from Mus musculus (Mouse).